A 172-amino-acid chain; its full sequence is Large ribosomal subunit protein uL10 (172 aa).

The protein belongs to the universal ribosomal protein uL10 family. In terms of assembly, part of the ribosomal stalk of the 50S ribosomal subunit. The N-terminus interacts with L11 and the large rRNA to form the base of the stalk. The C-terminus forms an elongated spine to which L12 dimers bind in a sequential fashion forming a multimeric L10(L12)X complex.

In terms of biological role, forms part of the ribosomal stalk, playing a central role in the interaction of the ribosome with GTP-bound translation factors. The sequence is that of Large ribosomal subunit protein uL10 from Chlorobium phaeobacteroides (strain DSM 266 / SMG 266 / 2430).